A 509-amino-acid chain; its full sequence is Maturase K (509 aa).

This sequence belongs to the intron maturase 2 family. MatK subfamily.

It localises to the plastid. The protein resides in the chloroplast. Usually encoded in the trnK tRNA gene intron. Probably assists in splicing its own and other chloroplast group II introns. The chain is Maturase K from Arpophyllum giganteum (Hyacinth orchid).